We begin with the raw amino-acid sequence, 81 residues long: MSSGGLLLLLGLLTLWAELTPVSGRPRFCELAPSAGSCFAFVPSYYYNQYSNTCHSFTYSGCGGNANRFRTIDECNRTCVG.

The signal sequence occupies residues 1–24 (MSSGGLLLLLGLLTLWAELTPVSG). The 51-residue stretch at 29 to 79 (CELAPSAGSCFAFVPSYYYNQYSNTCHSFTYSGCGGNANRFRTIDECNRTC) folds into the BPTI/Kunitz inhibitor domain. Intrachain disulfides connect cysteine 29–cysteine 79, cysteine 38–cysteine 62, and cysteine 54–cysteine 75. An N-linked (GlcNAc...) asparagine glycan is attached at asparagine 76.

In terms of tissue distribution, expressed by the venom gland.

It localises to the secreted. Serine protease inhibitor that inhibits chymotrypsin (Ki=25 nM). Also interacts with vasopressin V2 receptor (V2R/AVPR2). Inhibits vasopressin binding human V2R in the nanomolar range (Ki=112 nM), and also moderately inhibits vasopressin-induced cAMP production (IC(50)=138 nM). In vivo, intraperitoneal injection of this protein into rats increases diuresis by 2.2-fold, without any loss of electrolytes. The sequence is that of Kunitz-type serine protease inhibitor NACI from Naja atra (Chinese cobra).